The primary structure comprises 295 residues: Diaminopimelate epimerase (295 aa).

Substrate-binding residues include N11 and N67. Catalysis depends on C76, which acts as the Proton donor. Residues 77 to 78, N171, N210, and 228 to 229 contribute to the substrate site; these read GN and ER. Residue C237 is the Proton acceptor of the active site. 238–239 serves as a coordination point for substrate; that stretch reads GT.

Belongs to the diaminopimelate epimerase family. Homodimer.

It localises to the cytoplasm. The enzyme catalyses (2S,6S)-2,6-diaminopimelate = meso-2,6-diaminopimelate. Its pathway is amino-acid biosynthesis; L-lysine biosynthesis via DAP pathway; DL-2,6-diaminopimelate from LL-2,6-diaminopimelate: step 1/1. Its function is as follows. Catalyzes the stereoinversion of LL-2,6-diaminopimelate (L,L-DAP) to meso-diaminopimelate (meso-DAP), a precursor of L-lysine. This is Diaminopimelate epimerase from Methanocaldococcus jannaschii (strain ATCC 43067 / DSM 2661 / JAL-1 / JCM 10045 / NBRC 100440) (Methanococcus jannaschii).